Here is a 261-residue protein sequence, read N- to C-terminus: Probable septum site-determining protein MinC (261 aa).

The disordered stretch occupies residues 106 to 144; that stretch reads RAPAAKPADEAEPAAVPAVETAAAPAAAAAPEQSSDPAP. Residues 118-144 are compositionally biased toward low complexity; the sequence is PAAVPAVETAAAPAAAAAPEQSSDPAP.

Belongs to the MinC family. As to quaternary structure, interacts with MinD and FtsZ.

Cell division inhibitor that blocks the formation of polar Z ring septums. Rapidly oscillates between the poles of the cell to destabilize FtsZ filaments that have formed before they mature into polar Z rings. Prevents FtsZ polymerization. The protein is Probable septum site-determining protein MinC of Burkholderia orbicola (strain MC0-3).